A 283-amino-acid chain; its full sequence is Large ribosomal subunit protein uL2 (283 aa).

A disordered region spans residues 215–283 (RHKGIRPTVR…IRGRKKRINN (69 aa)). Residues 274-283 (IRGRKKRINN) are compositionally biased toward basic residues.

Belongs to the universal ribosomal protein uL2 family. In terms of assembly, part of the 50S ribosomal subunit. Forms a bridge to the 30S subunit in the 70S ribosome.

Its function is as follows. One of the primary rRNA binding proteins. Required for association of the 30S and 50S subunits to form the 70S ribosome, for tRNA binding and peptide bond formation. It has been suggested to have peptidyltransferase activity; this is somewhat controversial. Makes several contacts with the 16S rRNA in the 70S ribosome. The polypeptide is Large ribosomal subunit protein uL2 (Mycoplasma mobile (strain ATCC 43663 / 163K / NCTC 11711) (Mesomycoplasma mobile)).